The following is a 404-amino-acid chain: Tryptophan synthase beta chain (404 aa).

Lys-98 is modified (N6-(pyridoxal phosphate)lysine).

It belongs to the TrpB family. As to quaternary structure, tetramer of two alpha and two beta chains. It depends on pyridoxal 5'-phosphate as a cofactor.

The enzyme catalyses (1S,2R)-1-C-(indol-3-yl)glycerol 3-phosphate + L-serine = D-glyceraldehyde 3-phosphate + L-tryptophan + H2O. Its pathway is amino-acid biosynthesis; L-tryptophan biosynthesis; L-tryptophan from chorismate: step 5/5. Functionally, the beta subunit is responsible for the synthesis of L-tryptophan from indole and L-serine. This chain is Tryptophan synthase beta chain, found in Rhodopseudomonas palustris (strain BisA53).